Here is a 627-residue protein sequence, read N- to C-terminus: Neuronal acetylcholine receptor subunit alpha-4 (627 aa).

The signal sequence occupies residues 1–28 (MELGGPGAPRLLPPLLLLLGTGLLRASS). Topologically, residues 29 to 242 (HVETRAHAEE…ITYAFVIRRL (214 aa)) are extracellular. N57 carries N-linked (GlcNAc...) asparagine glycosylation. The Ca(2+) site is built by V76 and E78. N107 and N174 each carry an N-linked (GlcNAc...) asparagine glycan. 2 disulfides stabilise this stretch: C161/C175 and C225/C226. A helical membrane pass occupies residues 243 to 267 (PLFYTINLIIPCLLISCLTVLVFYL). Residue C271 is the site of S-palmitoyl cysteine attachment. A run of 2 helical transmembrane segments spans residues 275-293 (ITLC…LLIT) and 309-330 (YLLF…VLNV). Residues 331-600 (HHRSPRTHTM…WKYVAMVIDR (270 aa)) lie on the Cytoplasmic side of the membrane. Disordered regions lie at residues 382–479 (PRFW…EAVE) and 497–559 (DATS…RHLP). 3 positions are modified to phosphoserine: S424, S538, and S541. The chain crosses the membrane as a helical span at residues 601 to 619 (IFLWMFIIVCLLGTVGLFL).

Belongs to the ligand-gated ion channel (TC 1.A.9) family. Acetylcholine receptor (TC 1.A.9.1) subfamily. Alpha-4/CHRNA4 sub-subfamily. Neuronal AChR is composed of two different types of subunits: alpha and beta. CHRNA4 forms heteropentameric neuronal acetylcholine receptors with CHRNB2 and CHRNB4, as well as CHRNA5 and CHRNB3 as accesory subunits. Found in two major stoichiometric forms, LS (low agonist sensitivity): (CHRNA4)3:(CHRNB2)2 and HS (high agonist sensitivity): (CHRNA4)2:(CHRNB2)3, the two stoichiometric forms differ in their unitary conductance, calcium permeability, ACh sensitivity and potentiation by divalent cation. Cells produce predominantly an (CHRNA4)3:(CHRNB2)2 nAChR. The (CHRNA4)2:(CHRNB2)3 expression is selectively up-regulated by nicotine and has lower single channel conductance and calcium permeability. In the striatum, also forms CHRNA4:CHRNA6:CHRNB2 complexes. Also found in the stoichiometric form: (CHRNA4:CHRNB2)2:CHRNB3. Interacts with RIC3; which is required for proper folding and assembly. Interacts with LYPD6.

It is found in the synaptic cell membrane. The protein localises to the cell membrane. The enzyme catalyses Ca(2+)(in) = Ca(2+)(out). The catalysed reaction is K(+)(in) = K(+)(out). It catalyses the reaction Na(+)(in) = Na(+)(out). With respect to regulation, activated by a myriad of ligands such as acetylcholine, cytisine, nicotine, choline and epibatidine. Channel potentiation by calcium is stoichiometry-selective, CHRNA4:CHRNB2 nACh receptor is achieved by calcium association with topographically distinct sites framed by anionic residues within the CHRNA4 subunit and between the CHRNA4 and CHRNB2 subunits. nAChR activity is inhibited by the antagonist alpha-conotoxins BuIA, PnIA, GID and MII, small disulfide-constrained peptides from cone snails. In terms of biological role, component of neuronal acetylcholine receptors (nAChRs) that function as pentameric, ligand-gated cation channels with high calcium permeability among other activities. nAChRs are excitatory neurotrasnmitter receptors formed by a collection of nAChR subunits known to mediate synaptic transmission in the nervous system and the neuromuscular junction. Each nAchR subunit confers differential attributes to channel properties, including activation, deactivation and desensitization kinetics, pH sensitivity, cation permeability, and binding to allosteric modulators. CHRNA4 forms heteropentameric neuronal acetylcholine receptors with CHRNB2 and CHRNB4, as well as CHRNA5 and CHRNB3 as accesory subunits. Is the most abundant nAChR subtype expressed in the central nervous system. Found in two major stoichiometric forms,(CHRNA4)3:(CHRNB2)2 and (CHRNA4)2:(CHRNB2)3, the two stoichiometric forms differ in their unitary conductance, calcium permeability, ACh sensitivity and potentiation by divalent cation. Involved in the modulation of calcium-dependent signaling pathways, influences the release of neurotransmitters, including dopamine, glutamate and GABA. This Pan troglodytes (Chimpanzee) protein is Neuronal acetylcholine receptor subunit alpha-4 (CHRNA4).